The sequence spans 465 residues: Phospholipase A1-II 5 (465 aa).

The active-site Acyl-ester intermediate is serine 233. Catalysis depends on charge relay system residues serine 233, aspartate 297, and histidine 336.

Belongs to the AB hydrolase superfamily. Lipase family.

The protein resides in the cytoplasm. In terms of biological role, acylhydrolase that catalyzes the hydrolysis of phospholipids at the sn-1 position. The polypeptide is Phospholipase A1-II 5 (Oryza sativa subsp. indica (Rice)).